Reading from the N-terminus, the 263-residue chain is Undecaprenyl-diphosphatase 2 (263 aa).

Helical transmembrane passes span 17-37, 42-62, 83-103, 106-126, 142-162, 183-203, 216-236, and 242-262; these read TEFL…LIGF, AKVF…VIFW, LHII…HSAI, VLFG…LMIV, ITYK…WPGF, AEYT…LDLI, LFAT…VSFL, and VKLT…YFFI.

It belongs to the UppP family.

It is found in the cell membrane. It carries out the reaction di-trans,octa-cis-undecaprenyl diphosphate + H2O = di-trans,octa-cis-undecaprenyl phosphate + phosphate + H(+). Functionally, catalyzes the dephosphorylation of undecaprenyl diphosphate (UPP). Confers resistance to bacitracin. The protein is Undecaprenyl-diphosphatase 2 of Bacillus anthracis.